The sequence spans 854 residues: ATP-dependent zinc metalloprotease FtsH (854 aa).

The Cytoplasmic segment spans residues 1–5; that stretch reads MNRKT. The helical transmembrane segment at 6–26 threads the bilayer; the sequence is VFRNVLLVAVVLLVIYAFSYF. The Extracellular portion of the chain corresponds to 27–112; it reads SNDTRDFKTV…FNTTVTQESW (86 aa). The helical transmembrane segment at 113 to 133 threads the bilayer; it reads LTSILLFVLPMIILFGIFFFV. At 134-854 the chain is on the cytoplasmic side; that stretch reads MNRMQGGGGR…ARWDGPDGSR (721 aa). An ATP-binding site is contributed by 207 to 214; the sequence is GPPGTGKT. His-429 is a Zn(2+) binding site. Residue Glu-430 is part of the active site. Zn(2+)-binding residues include His-433 and Asp-505. The disordered stretch occupies residues 658–854; it reads AGAPNSGVPN…ARWDGPDGSR (197 aa). 2 stretches are compositionally biased toward low complexity: residues 661–692 and 698–719; these read PNSG…AQPS and APQQ…WSAP. A compositionally biased stretch (pro residues) spans 720 to 730; the sequence is GWPPRENPSPT. The span at 749–778 shows a compositional bias: low complexity; the sequence is NQSQGQYGQPQHGQPQPDQGQYGQPHPGQQ. Polar residues predominate over residues 812–822; it reads GNPSGENQWQS. Pro residues predominate over residues 825–834; sequence PEQPQTPPPH.

It in the central section; belongs to the AAA ATPase family. The protein in the C-terminal section; belongs to the peptidase M41 family. In terms of assembly, homohexamer. The cofactor is Zn(2+).

It localises to the cell membrane. Functionally, acts as a processive, ATP-dependent zinc metallopeptidase for both cytoplasmic and membrane proteins. Plays a role in the quality control of integral membrane proteins. The polypeptide is ATP-dependent zinc metalloprotease FtsH (Rhodococcus erythropolis (strain PR4 / NBRC 100887)).